Here is a 148-residue protein sequence, read N- to C-terminus: D-aminoacyl-tRNA deacylase (148 aa).

The Gly-cisPro motif, important for rejection of L-amino acids motif lies at 137–138; it reads GP.

Belongs to the DTD family. Homodimer.

It localises to the cytoplasm. It carries out the reaction glycyl-tRNA(Ala) + H2O = tRNA(Ala) + glycine + H(+). It catalyses the reaction a D-aminoacyl-tRNA + H2O = a tRNA + a D-alpha-amino acid + H(+). An aminoacyl-tRNA editing enzyme that deacylates mischarged D-aminoacyl-tRNAs. Also deacylates mischarged glycyl-tRNA(Ala), protecting cells against glycine mischarging by AlaRS. Acts via tRNA-based rather than protein-based catalysis; rejects L-amino acids rather than detecting D-amino acids in the active site. By recycling D-aminoacyl-tRNA to D-amino acids and free tRNA molecules, this enzyme counteracts the toxicity associated with the formation of D-aminoacyl-tRNA entities in vivo and helps enforce protein L-homochirality. The chain is D-aminoacyl-tRNA deacylase from Lacticaseibacillus casei (strain BL23) (Lactobacillus casei).